The primary structure comprises 253 residues: Phosphate import ATP-binding protein PstB (253 aa).

The ABC transporter domain occupies 8–248 (IQVRDLDLFY…PRDKRTEDYI (241 aa)). 40-47 (GPSGCGKS) contributes to the ATP binding site.

It belongs to the ABC transporter superfamily. Phosphate importer (TC 3.A.1.7) family. The complex is composed of two ATP-binding proteins (PstB), two transmembrane proteins (PstC and PstA) and a solute-binding protein (PstS).

It is found in the cell membrane. It carries out the reaction phosphate(out) + ATP + H2O = ADP + 2 phosphate(in) + H(+). In terms of biological role, part of the ABC transporter complex PstSACB involved in phosphate import. Responsible for energy coupling to the transport system. This is Phosphate import ATP-binding protein PstB from Clostridium perfringens (strain ATCC 13124 / DSM 756 / JCM 1290 / NCIMB 6125 / NCTC 8237 / Type A).